The following is a 146-amino-acid chain: Sordarin/hypoxysordarin biosynthesis cluster protein G (146 aa).

It functions in the pathway antibiotic biosynthesis. Functionally, part of the gene cluster that mediates the biosynthesis of sordarin and hypoxysordarin, glycoside antibiotics with a unique tetracyclic diterpene aglycone structure. First, the geranylgeranyl diphosphate synthase sdnC constructs GGDP from farnesyl diphosphate and isopentenyl diphosphate. The diterpene cyclase sdnA then catalyzes the cyclization of GGDP to afford cycloaraneosene. Cycloaraneosene is then hydroxylated four times by the putative cytochrome P450 monooxygenases sdnB, sdnE, sdnF and sdnH to give a hydroxylated cycloaraneosene derivative such as cycloaraneosene-8,9,13,19-tetraol. Although the order of the hydroxylations is unclear, at least C8, C9 and C13 of the cycloaraneosene skeleton are hydroxylated before the sordaricin formation. Dehydration of the 13-hydroxy group of the hydroxylated cycloaraneosene derivative might be catalyzed by an unassigned hypothetical protein such as sdnG and sdnP to construct the cyclopentadiene moiety. The FAD-dependent oxidoreductase sdnN is proposed to catalyze the oxidation at C9 of the hydroxylated cycloaraneosene derivative and also catalyze the Baeyer-Villiger oxidation to give the lactone intermediate. The presumed lactone intermediate would be hydrolyzed to give an acrolein moiety and a carboxylate moiety. Then, [4+2]cycloaddition would occur between the acrolein moiety and the cyclopentadiene moiety to give sordaricin. SdnN might also be involved in the [4+2]cycloaddition after the hypothesized oxidation to accommodate the oxidized product and prompt the [4+2]cycloaddition. GDP-6-deoxy-D-altrose may be biosynthesized from GDP-D-mannose by the putative GDP-mannose-4,6-dehydratase sdnI and the short-chain dehydrogenase sdnK. The glycosyltransferase sdnJ catalyzes the attachment of 6-deoxy-D-altrose onto the 19-hydroxy group of sordaricin to give 4'-O-demethylsordarin. The methyltransferase sdnD would complete the biosynthesis of sordarin. Sordarin can be further modified into hypoxysordarin. The unique acyl chain at the 3'-hydroxy group of hypoxysordarin would be constructed by an iterative type I PKS sdnO and the trans-acting polyketide methyltransferase sdnL. SdnL would be responsible for the introduction of an alpha-methyl group of the polyketide chain. Alternatively, the beta-lactamase-like protein sdnR might be responsible for the cleavage and transfer of the polyketide chain from the PKS sdnO to sordarin. Two putative cytochrome P450 monooxygenases, sdnQ and sdnT, might catalyze the epoxidations of the polyketide chain to complete the biosynthesis of hypoxysordarin. Transcriptional regulators sdnM and sdnS are presumably encoded for the transcriptional regulation of the expression of the sdn gene cluster. This is Sordarin/hypoxysordarin biosynthesis cluster protein G from Sordaria araneosa (Pleurage araneosa).